A 307-amino-acid chain; its full sequence is Lactamase-like protein vrtG (307 aa).

Zn(2+) contacts are provided by His-97, His-99, Asp-101, and His-102. Asp-101 functions as the Proton donor/acceptor in the catalytic mechanism.

This sequence belongs to the metallo-beta-lactamase superfamily. Requires Zn(2+) as cofactor.

The protein operates within secondary metabolite biosynthesis; terpenoid biosynthesis. Lactamase-like protein; part of the gene cluster that mediates the biosynthesis of viridicatumtoxin, a tetracycline-like fungal meroterpenoid with a unique, fused spirobicyclic ring system. The first step of the pathway is the production of the malonamoyl-CoA starter unit for the polyketide synthase vrtA. The aldolase vrtJ may be involved in the synthesis of the malonamate substrate for malonamoyl-CoA synthetase vrtB. The polyketide synthase vrtA then may utilize the malonamoyl-CoA starter unit, followed by sequential condensation of eight malonyl-CoA units to form the polyketide backbone. The cyclization of the last ring could be mediated by the lactamase-like protein vrtG. The proposed post-PKS tailoring steps are a hydroxylation at C5 catalyzed the cytochrome P450 monooxygenase vrtE, a hydroxylation at C12a catalyzed by VrtH and/or VrtI, and an O-methylation by the O-methyltransferase vrtF. VrtC is then proposed to catalyze the transfer of a geranyl group synthesized by vrtD to the aromatic C ring of the tetracyclic polyketide intermediate of viridicatumtoxin to yield previridicatumtoxin. Finally, the cytochrome P450 monooxygenase vrtK catalyzes the spirocyclization of the geranyl moiety of previridicatumtoxin to afford viridicatumtoxin. This chain is Lactamase-like protein vrtG, found in Penicillium aethiopicum.